We begin with the raw amino-acid sequence, 55 residues long: Rubredoxin-1 (55 aa).

A Rubredoxin-like domain is found at 1–54; that stretch reads MKKWQCVVCGLIYDEAKGWPEEGIEAGTRWEDVPEDWLCPDCGVGKLDFEMIEI. Residues Cys6, Cys9, Cys39, and Cys42 each contribute to the Fe cation site.

Belongs to the rubredoxin family. Fe(3+) is required as a cofactor.

It localises to the cytoplasm. It functions in the pathway hydrocarbon metabolism; alkane degradation. Functionally, involved in the hydrocarbon hydroxylating system, which transfers electrons from NADH to rubredoxin reductase and then through rubredoxin to alkane 1 monooxygenase. The polypeptide is Rubredoxin-1 (rubA1) (Pseudomonas aeruginosa (strain ATCC 15692 / DSM 22644 / CIP 104116 / JCM 14847 / LMG 12228 / 1C / PRS 101 / PAO1)).